A 138-amino-acid chain; its full sequence is Salivary protein 15 Iper-3 (138 aa).

An N-terminal signal peptide occupies residues 1 to 21 (MESFVAMKVVCITVLFVIVAV). Residues asparagine 30, asparagine 42, asparagine 68, asparagine 107, and asparagine 127 are each glycosylated (N-linked (GlcNAc...) asparagine). The CD4-binding stretch occupies residues 119–138 (GPNGQKCANKSQCVGHIPGC).

It belongs to the salp15 family. In terms of assembly, interacts with host CD4. Interacts with host DC-SIGN (CD209). Interacts with Borrelia outer surface protein C (OspC). Expressed in salivary glands.

The protein localises to the secreted. Its function is as follows. Salivary tick protein that downregulates host immune system by binding to both dendritic cells, and CD4(+) T cells. Specifically binds to the CD4 coreceptor on T cells. This interaction prevents the activation of the Src kinase, Lck, and its downstream substrate Zap-70, and results in deficient activation of PLCgamma1, the repression of calcium fluxes triggered by T-cell antigen receptor (TCR) ligation, and a subsequent reduction in interleukin-2 production. This salivary protein also binds to DC-SIGN (CD209) on dendritic cells (DC) and activates the Raf-1 kinase/MEK signaling pathway that results in down-regulating expression of pro-inflammatory cytokines. Furthermore, it inhibits T cell proliferation induced by DCs. It also inhibits in vitro keratinocyte inflammation induced by Borrelia burgdorferi or by the major outer surface protein (OspC) of Borrelia. In addition, it downregulates chemokines and monocyte chemoattractant protein 1, as well as several antimicrobial peptides such as defensins, cathelicidin, psoriasin, and RNase 7. Apart from its immunomodulatory activities, it is also associated with protection of Borrelia spirochetes from antibody-mediated killing through its binding to OspC. In vivo, tests on different immune disease animal models show promising therapeutic results, e.g., in inhibiting HIV infection, experimental autoimmune encephalomyelitis, transplantation rejection, and asthma. In Ixodes persulcatus (Taiga tick), this protein is Salivary protein 15 Iper-3.